A 228-amino-acid chain; its full sequence is Woronin body membrane protein wscA (228 aa).

Transmembrane regions (helical) follow at residues 89 to 109, 130 to 150, 162 to 182, and 185 to 205; these read MTLY…GILQ, LIVS…IAGA, AGFM…LAFA, and FLPE…IGTY.

The protein belongs to the peroxisomal membrane protein PXMP2/4 family. As to quaternary structure, self-assembles into detergent-resistant oligomers and forms a complex with hexA assemblies.

It localises to the peroxisome membrane. The protein resides in the cell septum. In terms of biological role, woronin sorting complex protein involved in both Woronin bodies (WB) formation and inherence. Localizes to large peroxisome membranes where it self-assembles into detergent-resistant oligomers that envelop hex-1 assemblies, producing asymmetrical nascent WBs. These structures are then delivered to the cell cortex, which permits partitioning of the nascent WB and WB inheritance. The protein is Woronin body membrane protein wscA of Aspergillus fumigatus (strain ATCC MYA-4609 / CBS 101355 / FGSC A1100 / Af293) (Neosartorya fumigata).